The chain runs to 452 residues: cAMP/cGMP-dependent 3',5'-cAMP/cGMP phosphodiesterase A (452 aa).

A signal peptide spans 1 to 23; that stretch reads MALNKKLISLLLLIFIILNIVNS. A propeptide spanning residues 24–49 is cleaved from the precursor; sequence HQQEDCDDDDEDIGISAERSERRSVK. 3 N-linked (GlcNAc...) asparagine glycosylation sites follow: asparagine 101, asparagine 141, and asparagine 277.

It belongs to the cyclic nucleotide phosphodiesterase class-II family.

It localises to the secreted. It is found in the extracellular space. Its subcellular location is the cell surface. It carries out the reaction 3',5'-cyclic AMP + H2O = AMP + H(+). The catalysed reaction is 3',5'-cyclic GMP + H2O = GMP + H(+). With respect to regulation, inhibited by dithiotreitol (DTT). In terms of biological role, phosphodiesterase which displays a preference for cAMP over cGMP. Involved in the degradation of extracellular cAMP. Maintains the responsiveness of cells to the chemoattractant cAMP during the aggregation phase of development. The polypeptide is cAMP/cGMP-dependent 3',5'-cAMP/cGMP phosphodiesterase A (pdsA) (Dictyostelium discoideum (Social amoeba)).